A 341-amino-acid polypeptide reads, in one-letter code: Tryptophan--tRNA ligase (341 aa).

ATP-binding positions include 11–13 and 19–20; these read RPT and GH. The 'HIGH' region signature appears at 12–20; sequence PTGKLHIGH. D140 contributes to the L-tryptophan binding site. Residues 152–154, L194, and 202–206 contribute to the ATP site; these read GTD and KMSKS. The 'KMSKS' region motif lies at 202 to 206; that stretch reads KMSKS.

Belongs to the class-I aminoacyl-tRNA synthetase family. As to quaternary structure, homodimer.

Its subcellular location is the cytoplasm. The catalysed reaction is tRNA(Trp) + L-tryptophan + ATP = L-tryptophyl-tRNA(Trp) + AMP + diphosphate + H(+). Catalyzes the attachment of tryptophan to tRNA(Trp). In Streptococcus pneumoniae serotype 4 (strain ATCC BAA-334 / TIGR4), this protein is Tryptophan--tRNA ligase.